We begin with the raw amino-acid sequence, 1476 residues long: ABC-type transporter frbG (1476 aa).

The next 5 helical transmembrane spans lie at 26–46, 64–84, 97–117, 122–142, and 146–166; these read LLFEEAVLAAVPLGLCVVLAL, LYYAKLTALFLLASVQLVQLI, SIAIAAVSFASTIVFIGLCHL, SAKPSDLLTLYFVTCIAFDII, and TLWIVSGGTAVASTFTVGLVL. Asn244 is a glycosylation site (N-linked (GlcNAc...) asparagine). Transmembrane regions (helical) follow at residues 266–286, 302–322, 380–400, and 409–429; these read FLAGVLPRLALTGFTFAQPFL, AGATGTWLIVAYAGVYIGIAI, LQTMHQAWASFVDICLATWLL, and IPSVGFSLLCVVFGGGVAVMA. The ABC transmembrane type-1 1 domain occupies 274 to 553; the sequence is LALTGFTFAQ…FVHSAVNLML (280 aa). Residue Asn464 is glycosylated (N-linked (GlcNAc...) asparagine). Helical transmembrane passes span 487–507 and 533–553; these read CLVFMVSLTYLSNVFAPIIGF and IFALLTEGVGSFVHSAVNLML. Residues 619–845 form the ABC transporter 1 domain; that stretch reads IQARDTNIGW…VTAHVHNQTS (227 aa). Residue 652–659 participates in ATP binding; that stretch reads GPTNSGKS. Asn694, Asn776, Asn805, and Asn842 each carry an N-linked (GlcNAc...) asparagine glycan. 5 helical membrane passes run 898–918, 936–956, 1017–1037, 1121–1141, and 1151–1171; these read AVFLALCMALVFAMVFPSIWV, YLLVYFFLGVAALIALIGGGS, LFAFITCIAQAIVVCVSSPFV, LGLVLDLVVAGIAILLAIVIV, and GFLGIALTSLVSFGLNLGGFI. The ABC transmembrane type-1 2 domain maps to 898–1179; that stretch reads AVFLALCMAL…FIGGWTGLET (282 aa). The ABC transporter 2 domain maps to 1216–1447; it reads IVFDDVTASY…LSSSSPTSSP (232 aa). N-linked (GlcNAc...) asparagine glycosylation is present at Asn1235. 1250–1257 is a binding site for ATP; that stretch reads GRTGSGKS.

This sequence belongs to the ABC transporter superfamily. ABCC family. Conjugate transporter (TC 3.A.1.208) subfamily.

It is found in the cell membrane. Functionally, ABC-type transporter; part of the gene cluster that mediates the biosynthesis of the antifungal antibiotic FR901469, an inhibitor of beta-1,3-glucansynthase, exerting antifungal activity against the pathogenes Candida albicans and Aspergillus fumigatus. FR901469 is a cyclic depsipeptide containing 12 amino acid residues and a fatty acid chain. Probably involved in the secretion of FR901469. The chain is ABC-type transporter frbG from Dothideomycetidae sp. (strain 11243) (Fungal sp. (strain No.11243)).